The following is a 130-amino-acid chain: MNLIEQIEKEEIARLTANKTIPAFAPGDTVVVSVNVVEGNRKRVQAYEGVVIAKRNRGLNSSFIVRKISSGEGVERTFQLYSPLIAGIEVKRRGDVRRAKLYYLRQRSGKSARIKEKLVSKAAAAAKAAE.

This sequence belongs to the bacterial ribosomal protein bL19 family.

Functionally, this protein is located at the 30S-50S ribosomal subunit interface and may play a role in the structure and function of the aminoacyl-tRNA binding site. The polypeptide is Large ribosomal subunit protein bL19 (Cupriavidus taiwanensis (strain DSM 17343 / BCRC 17206 / CCUG 44338 / CIP 107171 / LMG 19424 / R1) (Ralstonia taiwanensis (strain LMG 19424))).